The following is a 428-amino-acid chain: Involucrin (428 aa).

2 disordered regions span residues 1 to 128 and 140 to 398; these read MSQQ…EEKK and KRDD…GQAQ. The segment covering 56-76 has biased composition (basic and acidic residues); the sequence is PSKHEEKHVTIVKGVPEHECE. Positions 77 to 92 are enriched in low complexity; the sequence is QQQQAQGQERQQQHWG. Basic and acidic residues-rich tracts occupy residues 107–117, 162–174, and 192–208; these read LKQEEAQREKQ, QLKH…KPLE, and QLKH…HLEQ. A compositionally biased stretch (low complexity) spans 209–218; that stretch reads QEGQLELPEQ. The span at 220–297 shows a compositional bias: basic and acidic residues; sequence DQPKHLEQLE…CEGQLEHLEQ (78 aa). Residues 298 to 311 are compositionally biased toward low complexity; it reads QEGQLELPEQQVGQ. Composition is skewed to basic and acidic residues over residues 313 to 327, 352 to 366, and 374 to 385; these read KHLE…HPEQ and QLKDLEQQERQL.

This sequence belongs to the involucrin family. In terms of assembly, directly or indirectly cross-linked to cornifelin (CNFN). Substrate of transglutaminase. Specific glutamines or lysines are cross-linked to keratins, desmoplakin and to inter involucrin molecules. Keratinocytes of epidermis and other stratified squamous epithelia.

The protein localises to the cytoplasm. Part of the insoluble cornified cell envelope (CE) of stratified squamous epithelia. The protein is Involucrin (IVL) of Cebus albifrons (White-fronted capuchin).